The following is a 460-amino-acid chain: Decaprenylphosphoryl-beta-D-ribose oxidase (460 aa).

The FAD-binding PCMH-type domain maps to threonine 19–threonine 193. Residues alanine 52–asparagine 62, glycine 116, threonine 121–glycine 124, cysteine 128–histidine 131, isoleucine 183, and tyrosine 414 each bind FAD.

This sequence belongs to the DprE1 family. Monomer. Interacts with DprE2 to form an epimerase complex.

It localises to the periplasm. It catalyses the reaction trans,octa-cis-decaprenylphospho-beta-D-ribofuranose + FAD + H(+) = trans,octa-cis-decaprenylphospho-beta-D-erythro-pentofuranosid-2-ulose + FADH2. It functions in the pathway cell wall biogenesis; cell wall polysaccharide biosynthesis. Its activity is regulated as follows. Is inhibited by 8-nitro-benzothiazinones (BTZs) such as BTZ043; BTZs are a new class of antimycobacterial agents that block formation of both cell-wall lipoarabinomannan and arabinogalactan via inhibition of decaprenyl-phospho-arabinose (DPA) synthesis. BTZs are suicide inhibitors that act via covalent modification of DprE1; the essential nitro group of these compounds is reduced by DprE1 to a nitroso group, which then specifically reacts with Cys-386 of DprE1 to form an irreversible semimercaptal adduct. Other compounds with diverse scaffolds (dinitrobenzamides and nitrobenzoquinoxalines) also act as covalent DprE1 inhibitors. In terms of biological role, component of the DprE1-DprE2 complex that catalyzes the 2-step epimerization of decaprenyl-phospho-ribose (DPR) to decaprenyl-phospho-arabinose (DPA), a key precursor that serves as the arabinose donor required for the synthesis of cell-wall arabinans. DprE1 catalyzes the first step of epimerization, namely FAD-dependent oxidation of the C2' hydroxyl of DPR to yield the keto intermediate decaprenyl-phospho-2'-keto-D-arabinose (DPX). The intermediate DPX is then transferred to DprE2 subunit of the epimerase complex, most probably through a 'substrate channel' at the interface of DprE1-DprE2 complex. Can also use farnesyl-phosphoryl-beta-D-ribofuranose (FPR) as substrate in vitro. Appears to be essential for the growth of M.smegmatis. The sequence is that of Decaprenylphosphoryl-beta-D-ribose oxidase from Mycolicibacterium smegmatis (strain ATCC 700084 / mc(2)155) (Mycobacterium smegmatis).